The following is a 303-amino-acid chain: N-acetyl-D-glucosamine kinase (303 aa).

Residues 4 to 11 and 133 to 140 contribute to the ATP site; these read GFDIGGTK and GVGGGLVL. The Zn(2+) site is built by His-157, Cys-177, Cys-179, and Cys-184.

The protein belongs to the ROK (NagC/XylR) family. NagK subfamily.

It carries out the reaction N-acetyl-D-glucosamine + ATP = N-acetyl-D-glucosamine 6-phosphate + ADP + H(+). It functions in the pathway cell wall biogenesis; peptidoglycan recycling. In terms of biological role, catalyzes the phosphorylation of N-acetyl-D-glucosamine (GlcNAc) derived from cell-wall degradation, yielding GlcNAc-6-P. The polypeptide is N-acetyl-D-glucosamine kinase (Salmonella arizonae (strain ATCC BAA-731 / CDC346-86 / RSK2980)).